We begin with the raw amino-acid sequence, 430 residues long: Dynactin subunit 2 (430 aa).

Disordered regions lie at residues 1–51 (MSEG…IDRS) and 201–228 (SLSS…SSSS). Residues 32 to 44 (SISNLADESSELV) show a composition bias toward polar residues. Coiled coils occupy residues 241 to 319 (TGEQ…QDET) and 397 to 430 (DDSF…QQQQ).

The protein belongs to the dynactin subunit 2 family. As to quaternary structure, subunit of dynactin, a multiprotein complex associated with dynein.

It localises to the cytoplasm. The protein resides in the cytoskeleton. It is found in the membrane. Functionally, modulates cytoplasmic dynein binding to an organelle, and plays a role in prometaphase chromosome alignment and spindle organization during mitosis. The chain is Dynactin subunit 2 (dynB) from Dictyostelium discoideum (Social amoeba).